A 311-amino-acid chain; its full sequence is Uridine phosphorylase 1 (311 aa).

Phosphate is bound by residues Gly-61, Arg-95, and Arg-139 to Thr-142. Residues Ser-143–Gly-144 and Gln-218–Arg-220 contribute to the uridine site.

The protein belongs to the PNP/UDP phosphorylase family. In terms of assembly, homodimer. The N-terminus is blocked.

It carries out the reaction uridine + phosphate = alpha-D-ribose 1-phosphate + uracil. The enzyme catalyses 2'-deoxyuridine + phosphate = 2-deoxy-alpha-D-ribose 1-phosphate + uracil. Its pathway is pyrimidine metabolism; UMP biosynthesis via salvage pathway; uracil from uridine (phosphorylase route): step 1/1. Its activity is regulated as follows. Strongly inhibited by 2,2'-anhydro-5-ethyluridine, a competitive inhibitor. In terms of biological role, catalyzes the reversible phosphorylytic cleavage of uridine to uracil and ribose-1-phosphate which can then be utilized as carbon and energy sources or in the rescue of pyrimidine bases for nucleotide synthesis. Shows broad substrate specificity and can also accept deoxyuridine and other analogous compounds. The polypeptide is Uridine phosphorylase 1 (Mus musculus (Mouse)).